Consider the following 151-residue polypeptide: Large ribosomal subunit protein bL9 (151 aa).

The protein belongs to the bacterial ribosomal protein bL9 family.

Its function is as follows. Binds to the 23S rRNA. The protein is Large ribosomal subunit protein bL9 of Prochlorococcus marinus (strain AS9601).